Consider the following 474-residue polypeptide: UDP-N-acetylmuramate--L-alanine ligase (474 aa).

116-122 contacts ATP; that stretch reads GTHGKTT.

This sequence belongs to the MurCDEF family.

Its subcellular location is the cytoplasm. The enzyme catalyses UDP-N-acetyl-alpha-D-muramate + L-alanine + ATP = UDP-N-acetyl-alpha-D-muramoyl-L-alanine + ADP + phosphate + H(+). Its pathway is cell wall biogenesis; peptidoglycan biosynthesis. Cell wall formation. This is UDP-N-acetylmuramate--L-alanine ligase from Hyphomonas neptunium (strain ATCC 15444).